Consider the following 238-residue polypeptide: 3-deoxy-D-manno-octulosonic acid kinase (238 aa).

Residue Asp167 is part of the active site.

The protein belongs to the protein kinase superfamily. KdkA/RfaP family.

It is found in the cell inner membrane. The enzyme catalyses an alpha-Kdo-(2-&gt;6)-lipid IVA + ATP = a 4-O-phospho-alpha-Kdo-(2-&gt;6)-lipid IVA + ADP + H(+). It participates in bacterial outer membrane biogenesis; LPS core biosynthesis. Its function is as follows. Catalyzes the ATP-dependent phosphorylation of the 3-deoxy-D-manno-octulosonic acid (Kdo) residue in Kdo-lipid IV(A) at the 4-OH position. The chain is 3-deoxy-D-manno-octulosonic acid kinase from Vibrio parahaemolyticus serotype O3:K6 (strain RIMD 2210633).